A 482-amino-acid chain; its full sequence is MASLSLVLRYVVFLSFFILQKPKETFSSRLQRSHAKVAQIGADDYPSSGRNTPVHDLGFPDFPSFQEAVAPPPPPPDLPLLAPPLPDVPLLPPPAFPDFEKPRLPVPVWPSLPEYPPFPFVDQSAPYQGFAPRFDESANWMPSTPSIPQVFPCLRFKSNLLRVEFWVSSGTAVKGKDRFCNRPSKLDPNPVDLKTVRLPSKFRLKKLLCRVESSEVCFGDGNEKDTNPSEIDLDSLPFDLKMVILTRLSAKSLTNFKRVSKMWSSIIGSQRFIDSFFTMSSKQSRCPKFPVNTRFVGYDPIDDQQKALSVSVPSRKRNLEHKVLTLGGGGQGWRHIEVTNAPFSPVTVGVSIDGFVYYGAYSPTPPMNPVLVCFDVRSEKISFIKAPNDVLQWGFDLWILEDVERHEWSKQTCVFPSSVAWDYVGDIQMSFPGTNKAGIGDDEEFRRCSGFVDEGECHVRIAPQHVESIARFKDPIMSRILM.

The F-box domain occupies 230 to 280 (EIDLDSLPFDLKMVILTRLSAKSLTNFKRVSKMWSSIIGSQRFIDSFFTMS).

In Arabidopsis thaliana (Mouse-ear cress), this protein is Probable F-box protein At1g30780.